The primary structure comprises 620 residues: Threonine--tRNA ligase (620 aa).

The TGS domain maps to 1–42 (MFEIAKGISNSLAKKSVGAKVDGKNVDMSYILDHDAEVEFID). A catalytic region spans residues 224–515 (DHRKLGKELE…LIEHYAGAFP (292 aa)). The Zn(2+) site is built by C315, H366, and H492.

The protein belongs to the class-II aminoacyl-tRNA synthetase family. In terms of assembly, homodimer. Requires Zn(2+) as cofactor.

The protein resides in the cytoplasm. It carries out the reaction tRNA(Thr) + L-threonine + ATP = L-threonyl-tRNA(Thr) + AMP + diphosphate + H(+). In terms of biological role, catalyzes the attachment of threonine to tRNA(Thr) in a two-step reaction: L-threonine is first activated by ATP to form Thr-AMP and then transferred to the acceptor end of tRNA(Thr). Also edits incorrectly charged L-seryl-tRNA(Thr). The sequence is that of Threonine--tRNA ligase from Fusobacterium nucleatum subsp. nucleatum (strain ATCC 25586 / DSM 15643 / BCRC 10681 / CIP 101130 / JCM 8532 / KCTC 2640 / LMG 13131 / VPI 4355).